Here is a 174-residue protein sequence, read N- to C-terminus: Non-classical export protein 2 homolog 1 (174 aa).

Residues 1–7 (MLSAADN) lie on the Cytoplasmic side of the membrane. The chain crosses the membrane as a helical span at residues 8 to 28 (LVRIINAVFLIISIGLISGLI). Residues 29–41 (GTQTKHSSRVNFC) are Extracellular-facing. Residues 42–62 (MFAAVYGLVTDSLYGFLANFW) traverse the membrane as a helical segment. Residues 63–69 (TSLTYPA) lie on the Cytoplasmic side of the membrane. A helical membrane pass occupies residues 70-90 (ILLVLDFLNFIFTFVAATALA). Topologically, residues 91-122 (VGIRCHSCKNKTYLEQNKIIQGSSSRCHQSQA) are extracellular. A helical transmembrane segment spans residues 123-143 (AVAFFYFSCFLFLIKVTVATM). The Cytoplasmic segment spans residues 144-174 (GMMQNGGFGSNTGFSRRRARRQMGIPTISQV).

The protein belongs to the NCE102 family.

It localises to the cell membrane. Functionally, involved in membrane organization. Required for the formation of membrane compartments of CAN1 (MCCs), localization of CAN1 at the MCCs and subsequent invagination of the plasma membrane at the MCCs sites. Involved in eisosome organization and might act as a sensor of sphingolipids that regulates plasma membrane function. Involved in a novel pathway of export of proteins that lack a cleavable signal sequence. Non-classical export pathway also functions as an alternative clearance/detoxification pathway to eliminate damaged material, when the basic repair pathway is not sufficient. The sequence is that of Non-classical export protein 2 homolog 1 (FHN1) from Saccharomyces cerevisiae (strain ATCC 204508 / S288c) (Baker's yeast).